The chain runs to 198 residues: Protein RD3-like (198 aa).

Positions 28–57 form a coiled coil; that stretch reads KTLLRELKWHLKERERLIQEIENEQKVKKT. Residues 133 to 168 form a disordered region; sequence GSEQEDLEDSGSMDCSAPSVIQGDSSKRADKDEIPT. Residues 157-166 are compositionally biased toward basic and acidic residues; the sequence is SSKRADKDEI.

The chain is Protein RD3-like (RD3L) from Homo sapiens (Human).